A 319-amino-acid polypeptide reads, in one-letter code: ATP-dependent 6-phosphofructokinase (319 aa).

Position 11 (G11) interacts with ATP. 21-25 (RAVVR) contacts ADP. Residues 72 to 73 (RY) and 102 to 105 (GDGS) each bind ATP. D103 lines the Mg(2+) pocket. 125–127 (TID) contacts substrate. The active-site Proton acceptor is D127. Residue R154 participates in ADP binding. Substrate is bound by residues R162 and 169-171 (MGR). ADP-binding positions include 185–187 (GAE), R211, and 213–215 (KKH). Residues E222, R243, and 249 to 252 (HVQR) each bind substrate.

Belongs to the phosphofructokinase type A (PFKA) family. ATP-dependent PFK group I subfamily. Prokaryotic clade 'B1' sub-subfamily. Homotetramer. The cofactor is Mg(2+).

It localises to the cytoplasm. The enzyme catalyses beta-D-fructose 6-phosphate + ATP = beta-D-fructose 1,6-bisphosphate + ADP + H(+). The protein operates within carbohydrate degradation; glycolysis; D-glyceraldehyde 3-phosphate and glycerone phosphate from D-glucose: step 3/4. Its activity is regulated as follows. Allosterically activated by ADP and other diphosphonucleosides, and allosterically inhibited by phosphoenolpyruvate. Functionally, catalyzes the phosphorylation of D-fructose 6-phosphate to fructose 1,6-bisphosphate by ATP, the first committing step of glycolysis. This is ATP-dependent 6-phosphofructokinase from Listeria welshimeri serovar 6b (strain ATCC 35897 / DSM 20650 / CCUG 15529 / CIP 8149 / NCTC 11857 / SLCC 5334 / V8).